The sequence spans 502 residues: GTPase Obg (502 aa).

Residues 2 to 159 (NRFIDRVVLH…HDLILELKSM (158 aa)) form the Obg domain. The OBG-type G domain occupies 160–341 (ADVGLVGFPS…LKYKLLEIVQ (182 aa)). GTP contacts are provided by residues 166–173 (GFPSAGKS), 191–195 (FTTLQ), 212–215 (DVPG), 292–295 (NKAD), and 322–324 (SAV). Residues Ser173 and Thr193 each coordinate Mg(2+). One can recognise an OCT domain in the interval 364-444 (DGRRRREEFE…IGGVTFEWEP (81 aa)).

This sequence belongs to the TRAFAC class OBG-HflX-like GTPase superfamily. OBG GTPase family. As to quaternary structure, monomer. Mg(2+) is required as a cofactor.

The protein localises to the cytoplasm. An essential GTPase which binds GTP, GDP and possibly (p)ppGpp with moderate affinity, with high nucleotide exchange rates and a fairly low GTP hydrolysis rate. Plays a role in control of the cell cycle, stress response, ribosome biogenesis and in those bacteria that undergo differentiation, in morphogenesis control. This chain is GTPase Obg, found in Corynebacterium efficiens (strain DSM 44549 / YS-314 / AJ 12310 / JCM 11189 / NBRC 100395).